The chain runs to 208 residues: Thiamine-phosphate synthase (208 aa).

Residues 37–39 (QVR) and Asn-70 contribute to the 4-amino-2-methyl-5-(diphosphooxymethyl)pyrimidine site. Mg(2+)-binding residues include Asp-71 and Asp-90. Position 109 (Thr-109) interacts with 4-amino-2-methyl-5-(diphosphooxymethyl)pyrimidine. Residue 135–137 (TTS) coordinates 2-[(2R,5Z)-2-carboxy-4-methylthiazol-5(2H)-ylidene]ethyl phosphate. Lys-138 lines the 4-amino-2-methyl-5-(diphosphooxymethyl)pyrimidine pocket. Residue Gly-166 participates in 2-[(2R,5Z)-2-carboxy-4-methylthiazol-5(2H)-ylidene]ethyl phosphate binding.

The protein belongs to the thiamine-phosphate synthase family. It depends on Mg(2+) as a cofactor.

The enzyme catalyses 2-[(2R,5Z)-2-carboxy-4-methylthiazol-5(2H)-ylidene]ethyl phosphate + 4-amino-2-methyl-5-(diphosphooxymethyl)pyrimidine + 2 H(+) = thiamine phosphate + CO2 + diphosphate. It catalyses the reaction 2-(2-carboxy-4-methylthiazol-5-yl)ethyl phosphate + 4-amino-2-methyl-5-(diphosphooxymethyl)pyrimidine + 2 H(+) = thiamine phosphate + CO2 + diphosphate. The catalysed reaction is 4-methyl-5-(2-phosphooxyethyl)-thiazole + 4-amino-2-methyl-5-(diphosphooxymethyl)pyrimidine + H(+) = thiamine phosphate + diphosphate. Its pathway is cofactor biosynthesis; thiamine diphosphate biosynthesis; thiamine phosphate from 4-amino-2-methyl-5-diphosphomethylpyrimidine and 4-methyl-5-(2-phosphoethyl)-thiazole: step 1/1. Condenses 4-methyl-5-(beta-hydroxyethyl)thiazole monophosphate (THZ-P) and 2-methyl-4-amino-5-hydroxymethyl pyrimidine pyrophosphate (HMP-PP) to form thiamine monophosphate (TMP). This chain is Thiamine-phosphate synthase, found in Salinispora arenicola (strain CNS-205).